Reading from the N-terminus, the 498-residue chain is Flavin-dependent halogenase otaD (498 aa).

Residues Gly14, Gly17, and Glu47 each contribute to the FAD site. Residues Ser326 and Gly327 each contribute to the chloride site. Residue Val328 participates in FAD binding.

The protein belongs to the flavin-dependent halogenase family.

The catalysed reaction is ochratoxin B + FADH2 + chloride + O2 = ochratoxin A + FAD + 2 H2O. The protein operates within mycotoxin biosynthesis. Its function is as follows. Flavin-dependent halogenase; part of the gene cluster that mediates the biosynthesis of ochratoxin A (OTA), a mycotoxin composed of a chlorinated type I polyketide dihydroisocoumarin moiety linked to L-phenylalanine, and demonstrated to have nephrotoxic, immunotoxic, genotoxic, neurotoxic, and teratogenic properties. OtaD chlorinates ochratoxin B (OTB) at the C-5 position to form OTA. The pathway begins with the highly reducing polyketide synthase otaA that catalyzes the formation of the isocoumarin group during the initial stages of biosynthesis, starting from one acetate and 4 malonate units, to originate the characteristic pentaketide skeleton 7-methylmellein (7-MM) of the OTA molecule. The newly identified cyclase otaY might be involved in the polyketide cyclization reaction during the initial steps of the OTA biosynthesis. 7-MM is then oxidized into 7-carboxymellein (also called ochratoxin beta) by the cytochrome P450 monooxygenase otaC. The NRPS encoded by the otaB gene is involved in the linking of phenylalanine to the dihydroisocoumarin ring. The reaction catalyzed by NRPS results in the production of ochratoxin B (OTB), which is the non-chlorinated analog of OTA and which subsequently serves as the substrate of the halogenase otaD for chlorination activity to form the final molecular structure of OTA, containing a chlorine atom in the C-5 position of the molecule. The sequence is that of Flavin-dependent halogenase otaD from Aspergillus carbonarius (strain ITEM 5010).